Reading from the N-terminus, the 287-residue chain is Acetylglutamate kinase (287 aa).

Substrate is bound by residues 70–71, Arg92, and Asn184; that span reads GG.

The protein belongs to the acetylglutamate kinase family. ArgB subfamily.

It localises to the cytoplasm. It carries out the reaction N-acetyl-L-glutamate + ATP = N-acetyl-L-glutamyl 5-phosphate + ADP. Its pathway is amino-acid biosynthesis; L-arginine biosynthesis; N(2)-acetyl-L-ornithine from L-glutamate: step 2/4. In terms of biological role, catalyzes the ATP-dependent phosphorylation of N-acetyl-L-glutamate. The chain is Acetylglutamate kinase from Roseobacter denitrificans (strain ATCC 33942 / OCh 114) (Erythrobacter sp. (strain OCh 114)).